An 859-amino-acid polypeptide reads, in one-letter code: Leucine--tRNA ligase (859 aa).

The 'HIGH' region motif lies at 42 to 52 (PYPSGRLHMGH). The short motif at 618-622 (KMSKS) is the 'KMSKS' region element. Lys-621 serves as a coordination point for ATP.

It belongs to the class-I aminoacyl-tRNA synthetase family.

The protein resides in the cytoplasm. The enzyme catalyses tRNA(Leu) + L-leucine + ATP = L-leucyl-tRNA(Leu) + AMP + diphosphate. This Shewanella sp. (strain MR-7) protein is Leucine--tRNA ligase.